Consider the following 140-residue polypeptide: Large ribosomal subunit protein uL14 (140 aa).

This sequence belongs to the universal ribosomal protein uL14 family.

The chain is Large ribosomal subunit protein uL14 (RpL23-A) from Aedes aegypti (Yellowfever mosquito).